The chain runs to 167 residues: Protein-export protein SecB (167 aa).

It belongs to the SecB family. As to quaternary structure, homotetramer, a dimer of dimers. One homotetramer interacts with 1 SecA dimer.

The protein localises to the cytoplasm. Functionally, one of the proteins required for the normal export of preproteins out of the cell cytoplasm. It is a molecular chaperone that binds to a subset of precursor proteins, maintaining them in a translocation-competent state. It also specifically binds to its receptor SecA. In Wolbachia pipientis wMel, this protein is Protein-export protein SecB.